The sequence spans 402 residues: Selenoprotein P (402 aa).

Positions 1 to 19 (MWRGLGLALALCLLLTGGT) are cleaved as a signal peptide. Position 59 (Sec-59) is a non-standard amino acid, selenocysteine. Residues Asn-83 and Asn-174 are each glycosylated (N-linked (GlcNAc...) asparagine). The interval 196 to 291 (KTAEASQRHH…VGSESLQPSL (96 aa)) is disordered. Basic residues predominate over residues 203-231 (RHHHPHPHSHPHPHPHPHPHPHPHPHHGH). 13 consecutive repeat copies span residues 204 to 205 (HH), 206 to 207 (HP), 208 to 209 (HP), 210 to 211 (HS), 212 to 213 (HP), 214 to 215 (HP), 216 to 217 (HP), 218 to 219 (HP), 220 to 221 (HP), 222 to 223 (HP), 224 to 225 (HP), 226 to 227 (HP), and 228 to 229 (HH). The tract at residues 204 to 229 (HHHPHPHSHPHPHPHPHPHPHPHPHH) is 13 X 2 AA tandem repeats of H-[PHS]. Basic and acidic residues predominate over residues 232-247 (QLHENAHLSESPKPDT). Over residues 259–269 (LHHHHHRHKGP) the composition is skewed to basic residues. Position 284 is a phosphoserine (Ser-284). Residues Sec-297, Sec-307, Sec-338, Sec-350, Sec-363, Sec-365, Sec-372, Sec-388, Sec-390, Sec-397, and Sec-399 are each a non-standard amino acid (selenocysteine). Residues 367 to 402 (LPPAAUQAAGQQLNPTEASTKUSUKNKAKMUKUPSN) are disordered.

It belongs to the selenoprotein P family. Post-translationally, phosphorylation sites are present in the extracellular medium. In terms of tissue distribution, brain and kidney. Most prominently expressed in the cerebellar cortex, hippocampus and olfactory bulb.

The protein resides in the secreted. Constitutes a major selenium pool in the brain and may play an important role in developing and/or modulating the morphology of neurons and/or glial cells. This Bos taurus (Bovine) protein is Selenoprotein P.